Here is a 959-residue protein sequence, read N- to C-terminus: Glycine dehydrogenase (decarboxylating) (959 aa).

N6-(pyridoxal phosphate)lysine is present on Lys708.

This sequence belongs to the GcvP family. The glycine cleavage system is composed of four proteins: P, T, L and H. Pyridoxal 5'-phosphate serves as cofactor.

It catalyses the reaction N(6)-[(R)-lipoyl]-L-lysyl-[glycine-cleavage complex H protein] + glycine + H(+) = N(6)-[(R)-S(8)-aminomethyldihydrolipoyl]-L-lysyl-[glycine-cleavage complex H protein] + CO2. Functionally, the glycine cleavage system catalyzes the degradation of glycine. The P protein binds the alpha-amino group of glycine through its pyridoxal phosphate cofactor; CO(2) is released and the remaining methylamine moiety is then transferred to the lipoamide cofactor of the H protein. In Yersinia pseudotuberculosis serotype O:1b (strain IP 31758), this protein is Glycine dehydrogenase (decarboxylating).